Consider the following 415-residue polypeptide: Gamma-glutamyl phosphate reductase (415 aa).

The protein belongs to the gamma-glutamyl phosphate reductase family.

It localises to the cytoplasm. It carries out the reaction L-glutamate 5-semialdehyde + phosphate + NADP(+) = L-glutamyl 5-phosphate + NADPH + H(+). The protein operates within amino-acid biosynthesis; L-proline biosynthesis; L-glutamate 5-semialdehyde from L-glutamate: step 2/2. Its function is as follows. Catalyzes the NADPH-dependent reduction of L-glutamate 5-phosphate into L-glutamate 5-semialdehyde and phosphate. The product spontaneously undergoes cyclization to form 1-pyrroline-5-carboxylate. The sequence is that of Gamma-glutamyl phosphate reductase from Bacillus subtilis (strain 168).